Here is a 706-residue protein sequence, read N- to C-terminus: Ribosomal RNA large subunit methyltransferase K/L (706 aa).

One can recognise a THUMP domain in the interval 43-154 (LMYQSLLWSR…RDMASVALDL (112 aa)).

It belongs to the methyltransferase superfamily. RlmKL family.

The protein localises to the cytoplasm. The catalysed reaction is guanosine(2445) in 23S rRNA + S-adenosyl-L-methionine = N(2)-methylguanosine(2445) in 23S rRNA + S-adenosyl-L-homocysteine + H(+). It carries out the reaction guanosine(2069) in 23S rRNA + S-adenosyl-L-methionine = N(2)-methylguanosine(2069) in 23S rRNA + S-adenosyl-L-homocysteine + H(+). Specifically methylates the guanine in position 2445 (m2G2445) and the guanine in position 2069 (m7G2069) of 23S rRNA. In Yersinia pestis (strain Pestoides F), this protein is Ribosomal RNA large subunit methyltransferase K/L.